The chain runs to 619 residues: Elongation factor 4 (619 aa).

Positions Ser17 to Glu198 constitute a tr-type G domain. Residues Asp29–Thr34 and Asn145–Asp148 contribute to the GTP site.

Belongs to the TRAFAC class translation factor GTPase superfamily. Classic translation factor GTPase family. LepA subfamily.

It is found in the cell membrane. It catalyses the reaction GTP + H2O = GDP + phosphate + H(+). Its function is as follows. Required for accurate and efficient protein synthesis under certain stress conditions. May act as a fidelity factor of the translation reaction, by catalyzing a one-codon backward translocation of tRNAs on improperly translocated ribosomes. Back-translocation proceeds from a post-translocation (POST) complex to a pre-translocation (PRE) complex, thus giving elongation factor G a second chance to translocate the tRNAs correctly. Binds to ribosomes in a GTP-dependent manner. The polypeptide is Elongation factor 4 (Micrococcus luteus (strain ATCC 4698 / DSM 20030 / JCM 1464 / CCM 169 / CCUG 5858 / IAM 1056 / NBRC 3333 / NCIMB 9278 / NCTC 2665 / VKM Ac-2230) (Micrococcus lysodeikticus)).